A 467-amino-acid chain; its full sequence is MKIRTRYAPSPTGFLHIGGARTALFNYLFAKHHNGDFILRIEDSDNSRNIKDGEKSQIENLLWLGIIPDEKPGSETKFGPYRQSEKLERYQKLAQELIKKGFAYYAFDNQEELKLQKKEQIAKGIFSFRYDQNWLKISDQEKQKRLKNKHFVIRFKVDKAKNFCWNDLVRGQICFEGSAISDWVIIKSDGFPTYNFAVVVDDFDMEISHIFRGEEHISNTPKQIGIYQAFNWKTPKFGHLTIITDKNGKKLSKRDKNLFQFIEDYKNQGYHSEAFFNFLALLGWTSPDSQEFFDHKSLIKAFDYKRLSKAPSHFDIEKLNWFSKSYISKMPVDKILENLELSDNQIWNRFFVETFQKSSIKYADFYKNFEFFHRPKQEMDEKMLEIFEKLDKKPVKIFASKIDYQNWDYTKINDLIKEIGQKLEITGKNLLLPIRLATTFTNSGPELARAIWLLGKKIIEKRLLKWK.

The short motif at 9-19 (PSPTGFLHIGG) is the 'HIGH' region element. The 'KMSKS' region signature appears at 250 to 254 (KLSKR). Lysine 253 contributes to the ATP binding site.

This sequence belongs to the class-I aminoacyl-tRNA synthetase family. Glutamate--tRNA ligase type 1 subfamily. In terms of assembly, monomer.

The protein resides in the cytoplasm. It catalyses the reaction tRNA(Glu) + L-glutamate + ATP = L-glutamyl-tRNA(Glu) + AMP + diphosphate. In terms of biological role, catalyzes the attachment of glutamate to tRNA(Glu) in a two-step reaction: glutamate is first activated by ATP to form Glu-AMP and then transferred to the acceptor end of tRNA(Glu). The polypeptide is Glutamate--tRNA ligase (Mesomycoplasma hyopneumoniae (strain J / ATCC 25934 / NCTC 10110) (Mycoplasma hyopneumoniae)).